We begin with the raw amino-acid sequence, 262 residues long: Putative outer membrane protein CPn_1034/CP_0818/CPj1034/CpB1074 (262 aa).

An N-terminal signal peptide occupies residues 1–17 (MKTWLFFTFLFSCSSFY).

It localises to the cell outer membrane. In Chlamydia pneumoniae (Chlamydophila pneumoniae), this protein is Putative outer membrane protein CPn_1034/CP_0818/CPj1034/CpB1074.